We begin with the raw amino-acid sequence, 33 residues long: Brevinin-2DYb (33 aa).

Cys27 and Cys33 form a disulfide bridge.

In terms of tissue distribution, expressed by the skin glands.

It localises to the secreted. Antimicrobial peptide. Active against the Gram-positive bacterium S.aureus (MIC=30 uM) and the Gram-negative bacterium E.coli (MIC=30 uM). In Rana dybowskii (Dybovsky's frog), this protein is Brevinin-2DYb.